The following is a 482-amino-acid chain: Glutamate--tRNA ligase (482 aa).

A 'HIGH' region motif is present at residues 10–20; sequence PSPTGFLHIGN. The short motif at 253 to 257 is the 'KMSKS' region element; it reads KLSKR. Residue Lys256 participates in ATP binding.

The protein belongs to the class-I aminoacyl-tRNA synthetase family. Glutamate--tRNA ligase type 1 subfamily. In terms of assembly, monomer.

It localises to the cytoplasm. The enzyme catalyses tRNA(Glu) + L-glutamate + ATP = L-glutamyl-tRNA(Glu) + AMP + diphosphate. Its function is as follows. Catalyzes the attachment of glutamate to tRNA(Glu) in a two-step reaction: glutamate is first activated by ATP to form Glu-AMP and then transferred to the acceptor end of tRNA(Glu). The sequence is that of Glutamate--tRNA ligase from Mesoplasma florum (strain ATCC 33453 / NBRC 100688 / NCTC 11704 / L1) (Acholeplasma florum).